A 504-amino-acid polypeptide reads, in one-letter code: Maturase K (504 aa).

It belongs to the intron maturase 2 family. MatK subfamily.

It localises to the plastid. The protein resides in the chloroplast. Functionally, usually encoded in the trnK tRNA gene intron. Probably assists in splicing its own and other chloroplast group II introns. In Turritis glabra (Tower mustard), this protein is Maturase K.